The primary structure comprises 110 residues: Small ribosomal subunit protein uS10m (110 aa).

The protein belongs to the universal ribosomal protein uS10 family.

Its subcellular location is the mitochondrion. The polypeptide is Small ribosomal subunit protein uS10m (RPS10) (Pisum sativum (Garden pea)).